Reading from the N-terminus, the 224-residue chain is NADH-quinone oxidoreductase subunit B (224 aa).

Residues C67, C68, C133, and C162 each contribute to the [4Fe-4S] cluster site. The segment at 200–224 (DMPAEKDRKRGERIKVTNLRTPDEI) is disordered. Positions 201–224 (MPAEKDRKRGERIKVTNLRTPDEI) are enriched in basic and acidic residues.

Belongs to the complex I 20 kDa subunit family. As to quaternary structure, NDH-1 is composed of 14 different subunits. Subunits NuoB, C, D, E, F, and G constitute the peripheral sector of the complex. [4Fe-4S] cluster serves as cofactor.

The protein localises to the cell inner membrane. It catalyses the reaction a quinone + NADH + 5 H(+)(in) = a quinol + NAD(+) + 4 H(+)(out). NDH-1 shuttles electrons from NADH, via FMN and iron-sulfur (Fe-S) centers, to quinones in the respiratory chain. The immediate electron acceptor for the enzyme in this species is believed to be ubiquinone. Couples the redox reaction to proton translocation (for every two electrons transferred, four hydrogen ions are translocated across the cytoplasmic membrane), and thus conserves the redox energy in a proton gradient. The chain is NADH-quinone oxidoreductase subunit B from Aeromonas salmonicida (strain A449).